A 290-amino-acid chain; its full sequence is Cilia- and flagella-associated protein 298-A (290 aa).

It belongs to the CFAP298 family.

It localises to the cytoplasm. It is found in the cytoskeleton. The protein localises to the cilium basal body. Functionally, plays a role in motile cilium function, possibly by acting on outer dynein arm assembly. Seems to be important for initiation rather than maintenance of cilium motility. Required for correct positioning of the cilium at the apical cell surface, suggesting an additional role in the planar cell polarity (PCP) pathway. May suppress canonical Wnt signaling activity. This chain is Cilia- and flagella-associated protein 298-A (cfap298-a), found in Xenopus laevis (African clawed frog).